A 427-amino-acid chain; its full sequence is 3-phosphoshikimate 1-carboxyvinyltransferase (427 aa).

3-phosphoshikimate is bound by residues lysine 22, serine 23, and arginine 27. Residue lysine 22 participates in phosphoenolpyruvate binding. 2 residues coordinate phosphoenolpyruvate: glycine 96 and arginine 124. The 3-phosphoshikimate site is built by serine 169, serine 170, glutamine 171, serine 197, aspartate 313, asparagine 336, and lysine 340. Glutamine 171 lines the phosphoenolpyruvate pocket. Aspartate 313 (proton acceptor) is an active-site residue. The phosphoenolpyruvate site is built by arginine 344, arginine 386, and lysine 411.

Belongs to the EPSP synthase family. In terms of assembly, monomer.

It localises to the cytoplasm. It carries out the reaction 3-phosphoshikimate + phosphoenolpyruvate = 5-O-(1-carboxyvinyl)-3-phosphoshikimate + phosphate. Its pathway is metabolic intermediate biosynthesis; chorismate biosynthesis; chorismate from D-erythrose 4-phosphate and phosphoenolpyruvate: step 6/7. Catalyzes the transfer of the enolpyruvyl moiety of phosphoenolpyruvate (PEP) to the 5-hydroxyl of shikimate-3-phosphate (S3P) to produce enolpyruvyl shikimate-3-phosphate and inorganic phosphate. In Shigella dysenteriae, this protein is 3-phosphoshikimate 1-carboxyvinyltransferase.